The primary structure comprises 56 residues: MSKFDDFDLDVVKVSKQDSKITPQWKSESLCTPGCVTGALQTCFLQTLTCNCKISK.

A propeptide spanning residues 1–24 (MSKFDDFDLDVVKVSKQDSKITPQ) is cleaved from the precursor. Trp-25 carries the N2-succinyltryptophan; partial modification. A cross-link (lanthionine (Ser-Cys)) is located at residues 27 to 31 (SESLC). 2,3-didehydroalanine (Ser) is present on Ser-29. 4 consecutive cross-links (beta-methyllanthionine (Thr-Cys)) follow at residues 32-35 (TPGC), 37-43 (TGALQTC), 47-50 (TLTC), and 49-52 (TCNC). Thr-42 bears the (Z)-2,3-didehydrobutyrine mark. Ser-55 is subject to 2,3-didehydroalanine (Ser).

Belongs to the type A lantibiotic family. Post-translationally, maturation of lantibiotics involves the enzymatic conversion of Thr, and Ser into dehydrated AA and the formation of thioether bonds with cysteine. This is followed by membrane translocation and cleavage of the modified precursor. In terms of processing, succinylated subtilin is 10-20 times less active than subtilin. The ratio subtilin/succinylated subtilin is about 1:2 after 24 hours growth. The 2,3-didehydrobutyrine is determined to be the Z-isomer.

Functionally, lanthionine-containing peptide antibiotic (lantibiotic) active on Gram-positive bacteria. The bactericidal activity of lantibiotics is based on depolarization of energized bacterial cytoplasmic membranes, initiated by the formation of aqueous transmembrane pores. The polypeptide is Lantibiotic subtilin (spaS) (Bacillus subtilis).